The sequence spans 180 residues: 5'(3')-deoxyribonucleotidase (180 aa).

Asp9 functions as the Nucleophile in the catalytic mechanism. Residues Asp9, Asp11, and Asp134 each contribute to the Mg(2+) site. Asp11 (proton donor) is an active-site residue.

The protein belongs to the 5'(3')-deoxyribonucleotidase family. Requires Mg(2+) as cofactor.

In terms of biological role, dephosphorylates nucleoside monophosphates such as the 5' and 2'(3')-phosphates of deoxyribonucleotides in vitro. This Clostridium acetobutylicum (strain ATCC 824 / DSM 792 / JCM 1419 / IAM 19013 / LMG 5710 / NBRC 13948 / NRRL B-527 / VKM B-1787 / 2291 / W) protein is 5'(3')-deoxyribonucleotidase.